The following is a 117-amino-acid chain: Non-specific lipid-transfer protein 2 (117 aa).

The signal sequence occupies residues 1 to 25 (MAGLMKLACLVLACMIVAGPITSNA). Cystine bridges form between C29–C76, C39–C53, C54–C99, and C74–C113.

Belongs to the plant LTP family.

Its function is as follows. Plant non-specific lipid-transfer proteins transfer phospholipids as well as galactolipids across membranes. May play a role in wax or cutin deposition in the cell walls of expanding epidermal cells and certain secretory tissues. The polypeptide is Non-specific lipid-transfer protein 2 (LTP2) (Brassica napus (Rape)).